Here is a 403-residue protein sequence, read N- to C-terminus: Phosphopentomutase (403 aa).

6 residues coordinate Mn(2+): aspartate 13, aspartate 298, histidine 303, aspartate 339, histidine 340, and histidine 351.

Belongs to the phosphopentomutase family. It depends on Mn(2+) as a cofactor.

It is found in the cytoplasm. It catalyses the reaction 2-deoxy-alpha-D-ribose 1-phosphate = 2-deoxy-D-ribose 5-phosphate. The catalysed reaction is alpha-D-ribose 1-phosphate = D-ribose 5-phosphate. It participates in carbohydrate degradation; 2-deoxy-D-ribose 1-phosphate degradation; D-glyceraldehyde 3-phosphate and acetaldehyde from 2-deoxy-alpha-D-ribose 1-phosphate: step 1/2. In terms of biological role, isomerase that catalyzes the conversion of deoxy-ribose 1-phosphate (dRib-1-P) and ribose 1-phosphate (Rib-1-P) to deoxy-ribose 5-phosphate (dRib-5-P) and ribose 5-phosphate (Rib-5-P), respectively. The chain is Phosphopentomutase from Streptococcus equi subsp. zooepidemicus (strain H70).